The sequence spans 280 residues: 3-phenylpropionate-dihydrodiol/cinnamic acid-dihydrodiol dehydrogenase (280 aa).

Position 143 (serine 143) interacts with substrate. Tyrosine 156 acts as the Proton acceptor in catalysis.

This sequence belongs to the short-chain dehydrogenases/reductases (SDR) family.

It catalyses the reaction 3-(cis-5,6-dihydroxycyclohexa-1,3-dien-1-yl)propanoate + NAD(+) = 3-(2,3-dihydroxyphenyl)propanoate + NADH + H(+). It carries out the reaction (2E)-3-(cis-5,6-dihydroxycyclohexa-1,3-dien-1-yl)prop-2-enoate + NAD(+) = (2E)-3-(2,3-dihydroxyphenyl)prop-2-enoate + NADH + H(+). It participates in aromatic compound metabolism; 3-phenylpropanoate degradation. In terms of biological role, converts 3-phenylpropionate-dihydrodiol (PP-dihydrodiol) and cinnamic acid-dihydrodiol (CI-dihydrodiol) into 3-(2,3-dihydroxylphenyl)propanoic acid (DHPP) and 2,3-dihydroxicinnamic acid (DHCI), respectively. The chain is 3-phenylpropionate-dihydrodiol/cinnamic acid-dihydrodiol dehydrogenase from Photorhabdus laumondii subsp. laumondii (strain DSM 15139 / CIP 105565 / TT01) (Photorhabdus luminescens subsp. laumondii).